The sequence spans 382 residues: Calcium/calmodulin-dependent protein kinase (382 aa).

Positions 23 to 278 (YKFGRTLGAG…SKEALGHIWL (256 aa)) constitute a Protein kinase domain. Residues 29–37 (LGAGTYGVV) and Lys50 each bind ATP. Asp142 acts as the Proton acceptor in catalysis. Residues 291 to 301 (ELEAYRRRARL) form a calmodulin-binding region. Disordered stretches follow at residues 318-344 (KEHE…GDGS) and 359-382 (QKQE…FSNA).

The protein belongs to the protein kinase superfamily. CAMK Ser/Thr protein kinase family. CaMK subfamily.

It carries out the reaction L-seryl-[protein] + ATP = O-phospho-L-seryl-[protein] + ADP + H(+). The catalysed reaction is L-threonyl-[protein] + ATP = O-phospho-L-threonyl-[protein] + ADP + H(+). The polypeptide is Calcium/calmodulin-dependent protein kinase (Metarhizium anisopliae (Entomophthora anisopliae)).